A 913-amino-acid polypeptide reads, in one-letter code: Bifunctional uridylyltransferase/uridylyl-removing enzyme (913 aa).

The interval 1 to 358 (MFNCDVTAID…PDEERPKKQP (358 aa)) is uridylyltransferase. The uridylyl-removing stretch occupies residues 359–729 (INARFNQVGD…EHRELALDAV (371 aa)). The 117-residue stretch at 476–592 (VDAHTLFLIR…TLFADLVGNV (117 aa)) folds into the HD domain. ACT domains follow at residues 730–815 (QVFV…RIPR) and 838–913 (IMSL…NDRV).

It belongs to the GlnD family. It depends on Mg(2+) as a cofactor.

The catalysed reaction is [protein-PII]-L-tyrosine + UTP = [protein-PII]-uridylyl-L-tyrosine + diphosphate. It carries out the reaction [protein-PII]-uridylyl-L-tyrosine + H2O = [protein-PII]-L-tyrosine + UMP + H(+). Its activity is regulated as follows. Uridylyltransferase (UTase) activity is inhibited by glutamine, while glutamine activates uridylyl-removing (UR) activity. Modifies, by uridylylation and deuridylylation, the PII regulatory proteins (GlnB and homologs), in response to the nitrogen status of the cell that GlnD senses through the glutamine level. Under low glutamine levels, catalyzes the conversion of the PII proteins and UTP to PII-UMP and PPi, while under higher glutamine levels, GlnD hydrolyzes PII-UMP to PII and UMP (deuridylylation). Thus, controls uridylylation state and activity of the PII proteins, and plays an important role in the regulation of nitrogen assimilation and metabolism. The sequence is that of Bifunctional uridylyltransferase/uridylyl-removing enzyme from Psychrobacter cryohalolentis (strain ATCC BAA-1226 / DSM 17306 / VKM B-2378 / K5).